A 1032-amino-acid chain; its full sequence is Phosphoenolpyruvate carboxylase 4 (1032 aa).

H154 is an active-site residue. Positions 377–407 (PNLQKQNEQDFSESDWEKIDNGSRSGLTSRG) are disordered. Polar residues predominate over residues 398-407 (GSRSGLTSRG). Residue K699 is part of the active site.

It belongs to the PEPCase type 1 family. As to quaternary structure, homotetramer. Requires Mg(2+) as cofactor. Expressed at low levels in flowers and siliques, and detectable in roots.

It localises to the cytoplasm. It carries out the reaction oxaloacetate + phosphate = phosphoenolpyruvate + hydrogencarbonate. Functionally, through the carboxylation of phosphoenolpyruvate (PEP) it forms oxaloacetate, a four-carbon dicarboxylic acid source for the tricarboxylic acid cycle. This chain is Phosphoenolpyruvate carboxylase 4 (PPC4), found in Arabidopsis thaliana (Mouse-ear cress).